Reading from the N-terminus, the 261-residue chain is Probable septum site-determining protein MinC (261 aa).

The tract at residues 106–144 (RAPAAKPADEAEPAAVPAVETAAAPAAAAAPEQSSDPAP) is disordered. A compositionally biased stretch (low complexity) spans 118–144 (PAAVPAVETAAAPAAAAAPEQSSDPAP).

It belongs to the MinC family. In terms of assembly, interacts with MinD and FtsZ.

Cell division inhibitor that blocks the formation of polar Z ring septums. Rapidly oscillates between the poles of the cell to destabilize FtsZ filaments that have formed before they mature into polar Z rings. Prevents FtsZ polymerization. In Burkholderia orbicola (strain MC0-3), this protein is Probable septum site-determining protein MinC.